Reading from the N-terminus, the 298-residue chain is Protease HtpX homolog (298 aa).

The next 2 membrane-spanning stretches (helical) occupy residues 14–34 (VVLL…AGYL) and 39–59 (YAMG…SMIF). His-143 lines the Zn(2+) pocket. Glu-144 is a catalytic residue. His-147 contacts Zn(2+). Helical transmembrane passes span 158-178 (IAVA…RMLW) and 197-217 (IITL…ASLI). Position 226 (Glu-226) interacts with Zn(2+).

The protein belongs to the peptidase M48B family. It depends on Zn(2+) as a cofactor.

Its subcellular location is the cell membrane. The protein is Protease HtpX homolog of Streptococcus pyogenes serotype M49 (strain NZ131).